The following is a 248-amino-acid chain: Cutinase cut1 (248 aa).

Residues 1 to 17 (MRSLSLFTALLAGQAFA) form the signal peptide. An intrachain disulfide couples cysteine 79 to cysteine 153. Catalysis depends on serine 164, which acts as the Nucleophile. A disulfide bridge links cysteine 212 with cysteine 219. Aspartate 216 is a catalytic residue. The active-site Proton donor/acceptor is histidine 229.

It belongs to the cutinase family. The 2 disulfide bonds play a critical role in holding the catalytic residues in juxta-position; reduction of the disulfide bridges results in the complete inactivation of the enzyme.

It is found in the secreted. The catalysed reaction is cutin + H2O = cutin monomers.. In terms of biological role, catalyzes the hydrolysis of complex carboxylic polyesters found in the cell wall of plants. May degrade cutin, a macromolecule that forms the structure of the plant cuticle. May also degrade suberin, a specialized macromolecule found in the cell wall of various plant tissues. This Trichoderma harzianum (Hypocrea lixii) protein is Cutinase cut1.